We begin with the raw amino-acid sequence, 240 residues long: Glutamine amidotransferase-like protein chry6 (240 aa).

Residues 13–205 enclose the Glutamine amidotransferase type-1 domain; the sequence is NFILDDTGGR…FVASDNPVLV (193 aa). Cys102 functions as the Nucleophile in the catalytic mechanism. Active-site residues include His185 and Glu187.

It belongs to the peptidase C26 family.

It functions in the pathway pigment biosynthesis. Glutamine amidotransferase-like protein; part of the gene cluster that mediates the biosynthesis of the yellow pigment chrysogine. Pyruvic acid and anthranilic acid are likely substrates for the nonribosomal peptide synthetase chry1/NRPS14, with pyruvic acid adenylated by the first A domain and anthranilic acid by the second. If pyruvic acid and anthranilic acid are merged and released from chry1/NRPS14 by hydrolysis, a subsequent amidation would lead to 2-pyruvoylaminobenzamide. This process is probably catalyzed by the amidotransferase chry2 using glutamine as amino donor. The dehydrogenase chry5 that has a terminal berberine bridge domain for C-N cyclization could catalyze the cyclization of 2-pyruvoylaminobenzamide to yield acetyl-4(3H)-quinazolidinone. A final reduction of acetyl-4(3H)-quinazolidinone catalyzed by the oxidoreductase chry4 would result in chrysogine. The sequence is that of Glutamine amidotransferase-like protein chry6 from Gibberella zeae (strain ATCC MYA-4620 / CBS 123657 / FGSC 9075 / NRRL 31084 / PH-1) (Wheat head blight fungus).